The chain runs to 238 residues: Uridylate kinase (238 aa).

12–15 serves as a coordination point for ATP; that stretch reads KLSG. Gly-54 is a UMP binding site. ATP is bound by residues Gly-55 and Arg-59. Residues Asp-74 and 135 to 142 each bind UMP; that span reads TGNPYFTT. ATP contacts are provided by Thr-162, Asn-163, Tyr-168, and Asp-171.

This sequence belongs to the UMP kinase family. Homohexamer.

Its subcellular location is the cytoplasm. It catalyses the reaction UMP + ATP = UDP + ADP. It functions in the pathway pyrimidine metabolism; CTP biosynthesis via de novo pathway; UDP from UMP (UMPK route): step 1/1. Its activity is regulated as follows. Inhibited by UTP. In terms of biological role, catalyzes the reversible phosphorylation of UMP to UDP. The polypeptide is Uridylate kinase (Rhodopseudomonas palustris (strain ATCC BAA-98 / CGA009)).